A 572-amino-acid polypeptide reads, in one-letter code: Proline--tRNA ligase (572 aa).

This sequence belongs to the class-II aminoacyl-tRNA synthetase family. ProS type 1 subfamily. As to quaternary structure, homodimer.

Its subcellular location is the cytoplasm. The catalysed reaction is tRNA(Pro) + L-proline + ATP = L-prolyl-tRNA(Pro) + AMP + diphosphate. Its function is as follows. Catalyzes the attachment of proline to tRNA(Pro) in a two-step reaction: proline is first activated by ATP to form Pro-AMP and then transferred to the acceptor end of tRNA(Pro). As ProRS can inadvertently accommodate and process non-cognate amino acids such as alanine and cysteine, to avoid such errors it has two additional distinct editing activities against alanine. One activity is designated as 'pretransfer' editing and involves the tRNA(Pro)-independent hydrolysis of activated Ala-AMP. The other activity is designated 'posttransfer' editing and involves deacylation of mischarged Ala-tRNA(Pro). The misacylated Cys-tRNA(Pro) is not edited by ProRS. In Salmonella newport (strain SL254), this protein is Proline--tRNA ligase.